We begin with the raw amino-acid sequence, 779 residues long: Mediator of RNA polymerase II transcription subunit 15 (779 aa).

2 stretches are compositionally biased toward polar residues: residues 70-90 and 98-108; these read NKNQ…NQQG and ALQTLATQGTR. Disordered regions lie at residues 70-131, 209-407, 437-512, and 629-649; these read NKNQ…GGNA, NPMQ…VPIG, FLRQ…NPQE, and PAKQ…TGSQ. Residues 114-130 show a composition bias toward gly residues; sequence GQMGPGGPMGNQMGGGN. Low complexity-rich tracts occupy residues 209-232 and 240-270; these read NPMQ…QPQG and PNQM…QMNQ. Gly residues predominate over residues 274–284; that stretch reads SSGGNQMGNLG. Low complexity-rich tracts occupy residues 285–295, 304–329, and 339–350; these read GNSPMNPGNMG, QQMP…QMNQ, and GPVQQQQQPGQV. Over residues 351–361 the composition is skewed to gly residues; sequence GMAGMGPGGPG. Composition is skewed to low complexity over residues 362–383, 393–402, and 451–468; these read NLQQ…APGQ, NMQAMGNQGN, and GPGS…IPSP. 2 stretches are compositionally biased toward polar residues: residues 477-500 and 640-649; these read QVSS…NTPG and PSTSGSTGSQ.

It belongs to the Mediator complex subunit 15 family. As to quaternary structure, component of the Mediator complex.

It localises to the nucleus. In terms of biological role, component of the Mediator complex, a coactivator involved in the regulated transcription of nearly all RNA polymerase II-dependent genes. Mediator functions as a bridge to convey information from gene-specific regulatory proteins to the basal RNA polymerase II transcription machinery. Mediator is recruited to promoters by direct interactions with regulatory proteins and serves as a scaffold for the assembly of a functional preinitiation complex with RNA polymerase II and the general transcription factors. The protein is Mediator of RNA polymerase II transcription subunit 15 (MED15) of Aedes aegypti (Yellowfever mosquito).